The primary structure comprises 662 residues: DNA ligase (662 aa).

NAD(+) contacts are provided by residues 31–35, 80–81, and Glu109; these read DYEYD and SL. Lys111 (N6-AMP-lysine intermediate) is an active-site residue. NAD(+) contacts are provided by Arg132, Glu166, Lys282, and Lys306. Residues Cys400, Cys403, Cys418, and Cys423 each contribute to the Zn(2+) site. In terms of domain architecture, BRCT spans 581-662; that stretch reads KVSNIFEGKT…FEEMLKGENI (82 aa).

The protein belongs to the NAD-dependent DNA ligase family. LigA subfamily. The cofactor is Mg(2+). It depends on Mn(2+) as a cofactor.

The enzyme catalyses NAD(+) + (deoxyribonucleotide)n-3'-hydroxyl + 5'-phospho-(deoxyribonucleotide)m = (deoxyribonucleotide)n+m + AMP + beta-nicotinamide D-nucleotide.. Its function is as follows. DNA ligase that catalyzes the formation of phosphodiester linkages between 5'-phosphoryl and 3'-hydroxyl groups in double-stranded DNA using NAD as a coenzyme and as the energy source for the reaction. It is essential for DNA replication and repair of damaged DNA. The chain is DNA ligase from Thermoanaerobacter sp. (strain X514).